The following is a 414-amino-acid chain: Enolase (414 aa).

Q162 lines the (2R)-2-phosphoglycerate pocket. E204 serves as the catalytic Proton donor. Mg(2+) is bound by residues D239, E280, and D307. 4 residues coordinate (2R)-2-phosphoglycerate: K332, R361, S362, and K383. K332 (proton acceptor) is an active-site residue.

Belongs to the enolase family. Mg(2+) is required as a cofactor.

It localises to the cytoplasm. Its subcellular location is the secreted. It is found in the cell surface. The enzyme catalyses (2R)-2-phosphoglycerate = phosphoenolpyruvate + H2O. Its pathway is carbohydrate degradation; glycolysis; pyruvate from D-glyceraldehyde 3-phosphate: step 4/5. Catalyzes the reversible conversion of 2-phosphoglycerate (2-PG) into phosphoenolpyruvate (PEP). It is essential for the degradation of carbohydrates via glycolysis. This chain is Enolase, found in Campylobacter jejuni subsp. jejuni serotype O:2 (strain ATCC 700819 / NCTC 11168).